Reading from the N-terminus, the 415-residue chain is MAASTNRLRFLYSSARTVPQTGSITPISRRTYATTEPSPSATGAPATARKRTNFTDKLNAGPSFADFVSGGEDNTPLEPSEAYALKTAMVGPAGRKKEMTRLPSWLKTPIPDSKNYQRLKKDLRGLNLHTVCEEARCPNISDCWGGSDKSAATATIMLMGDTCTRGCRFCSVKTNRRPPPLDPHEPENTAEAISRWSLGYVVLTSVDRDDLADGGARHFAETVIKIKQKKPSMLVECLTGDYLGDLEMVKLVARSGLDVYAHNVETVEALTPFVRDRRATFQQSLRVLEAAKQARPDLITKTSLMLGFGETEEQLWDALRQLRSVGVDVVTFGQYMRPTKRHMPVHEYVTPDQFELWRQRALDMGFLYCASGPLVRSSYKAGEAFIENVLKKRRAAGTAGESVTDSKAAVDEATR.

The N-terminal 32 residues, 1–32, are a transit peptide targeting the mitochondrion; sequence MAASTNRLRFLYSSARTVPQTGSITPISRRTY. Positions 20–32 are enriched in polar residues; it reads QTGSITPISRRTY. The segment at 20–53 is disordered; that stretch reads QTGSITPISRRTYATTEPSPSATGAPATARKRTN. Low complexity predominate over residues 33–47; the sequence is ATTEPSPSATGAPAT. 7 residues coordinate [4Fe-4S] cluster: C132, C137, C143, C163, C167, C170, and S378. The Radical SAM core domain maps to 146–367; sequence GSDKSAATAT…RQRALDMGFL (222 aa). Residues 395–415 are disordered; the sequence is AAGTAGESVTDSKAAVDEATR.

The protein belongs to the radical SAM superfamily. Lipoyl synthase family. [4Fe-4S] cluster serves as cofactor.

It is found in the mitochondrion. The enzyme catalyses [[Fe-S] cluster scaffold protein carrying a second [4Fe-4S](2+) cluster] + N(6)-octanoyl-L-lysyl-[protein] + 2 oxidized [2Fe-2S]-[ferredoxin] + 2 S-adenosyl-L-methionine + 4 H(+) = [[Fe-S] cluster scaffold protein] + N(6)-[(R)-dihydrolipoyl]-L-lysyl-[protein] + 4 Fe(3+) + 2 hydrogen sulfide + 2 5'-deoxyadenosine + 2 L-methionine + 2 reduced [2Fe-2S]-[ferredoxin]. The protein operates within protein modification; protein lipoylation via endogenous pathway; protein N(6)-(lipoyl)lysine from octanoyl-[acyl-carrier-protein]: step 2/2. Its function is as follows. Catalyzes the radical-mediated insertion of two sulfur atoms into the C-6 and C-8 positions of the octanoyl moiety bound to the lipoyl domains of lipoate-dependent enzymes, thereby converting the octanoylated domains into lipoylated derivatives. This is Lipoyl synthase, mitochondrial from Aspergillus flavus (strain ATCC 200026 / FGSC A1120 / IAM 13836 / NRRL 3357 / JCM 12722 / SRRC 167).